We begin with the raw amino-acid sequence, 320 residues long: Malate dehydrogenase (320 aa).

NAD(+)-binding positions include 10–15 (GSGMIG) and D34. Substrate contacts are provided by R83 and R89. NAD(+) contacts are provided by residues N96 and 119–121 (ITN). Substrate is bound by residues N121 and R152. The Proton acceptor role is filled by H176.

The protein belongs to the LDH/MDH superfamily. MDH type 3 family.

The enzyme catalyses (S)-malate + NAD(+) = oxaloacetate + NADH + H(+). In terms of biological role, catalyzes the reversible oxidation of malate to oxaloacetate. This is Malate dehydrogenase from Rhizobium johnstonii (strain DSM 114642 / LMG 32736 / 3841) (Rhizobium leguminosarum bv. viciae).